The following is a 246-amino-acid chain: Probable transcriptional regulatory protein TM1040_1893 (246 aa).

Residues Met-1–Arg-21 form a disordered region.

The protein belongs to the TACO1 family.

The protein localises to the cytoplasm. The polypeptide is Probable transcriptional regulatory protein TM1040_1893 (Ruegeria sp. (strain TM1040) (Silicibacter sp.)).